The sequence spans 96 residues: ATP-dependent Clp protease adapter protein ClpS (96 aa).

The protein belongs to the ClpS family. Binds to the N-terminal domain of the chaperone ClpA.

In terms of biological role, involved in the modulation of the specificity of the ClpAP-mediated ATP-dependent protein degradation. The chain is ATP-dependent Clp protease adapter protein ClpS from Campylobacter jejuni subsp. doylei (strain ATCC BAA-1458 / RM4099 / 269.97).